The sequence spans 61 residues: MAVPKRKTSPSKRGMRRSADGLKSATYVEDKNSGELRRPHHIDLKTGMYRGRQVLTPKESA.

A compositionally biased stretch (basic residues) spans 1–16 (MAVPKRKTSPSKRGMR). The disordered stretch occupies residues 1–35 (MAVPKRKTSPSKRGMRRSADGLKSATYVEDKNSGE).

This sequence belongs to the bacterial ribosomal protein bL32 family.

This chain is Large ribosomal subunit protein bL32, found in Agrobacterium fabrum (strain C58 / ATCC 33970) (Agrobacterium tumefaciens (strain C58)).